Here is a 389-residue protein sequence, read N- to C-terminus: S-adenosylmethionine synthase 2 (389 aa).

Position 17 (His-17) interacts with ATP. Residue Asp-19 coordinates Mg(2+). K(+) is bound at residue Glu-45. The L-methionine site is built by Glu-58 and Gln-102. The segment at 102–112 is flexible loop; sequence QSADIAVGVDA. Residues 166 to 168, 231 to 232, Asp-240, 246 to 247, Ala-263, and Lys-267 contribute to the ATP site; these read DSK, RF, and RK. Asp-240 contributes to the L-methionine binding site. Residue Lys-271 coordinates L-methionine.

Belongs to the AdoMet synthase family. Homotetramer; dimer of dimers. It depends on Mg(2+) as a cofactor. Requires K(+) as cofactor.

It localises to the cytoplasm. It carries out the reaction L-methionine + ATP + H2O = S-adenosyl-L-methionine + phosphate + diphosphate. It participates in amino-acid biosynthesis; S-adenosyl-L-methionine biosynthesis; S-adenosyl-L-methionine from L-methionine: step 1/1. Functionally, catalyzes the formation of S-adenosylmethionine (AdoMet) from methionine and ATP. The overall synthetic reaction is composed of two sequential steps, AdoMet formation and the subsequent tripolyphosphate hydrolysis which occurs prior to release of AdoMet from the enzyme. This Rhodospirillum rubrum (strain ATCC 11170 / ATH 1.1.1 / DSM 467 / LMG 4362 / NCIMB 8255 / S1) protein is S-adenosylmethionine synthase 2.